A 169-amino-acid polypeptide reads, in one-letter code: Shikimate kinase (169 aa).

Residue 12-17 (GCGKST) participates in ATP binding. A Mg(2+)-binding site is contributed by Ser-16. Residues Asp-34, Arg-57, and Gly-79 each contribute to the substrate site. Residue Arg-116 participates in ATP binding. Arg-133 contributes to the substrate binding site.

It belongs to the shikimate kinase family. In terms of assembly, monomer. Mg(2+) serves as cofactor.

The protein resides in the cytoplasm. It catalyses the reaction shikimate + ATP = 3-phosphoshikimate + ADP + H(+). It functions in the pathway metabolic intermediate biosynthesis; chorismate biosynthesis; chorismate from D-erythrose 4-phosphate and phosphoenolpyruvate: step 5/7. Catalyzes the specific phosphorylation of the 3-hydroxyl group of shikimic acid using ATP as a cosubstrate. The polypeptide is Shikimate kinase (Clostridium beijerinckii (strain ATCC 51743 / NCIMB 8052) (Clostridium acetobutylicum)).